The chain runs to 282 residues: Ribonuclease P protein subunit p38 (282 aa).

Disordered regions lie at residues 1–21 (MAAA…PLPV) and 61–103 (EDRK…QASG). At A2 the chain carries N-acetylalanine. Residue S12 is modified to Phosphoserine. Basic and acidic residues predominate over residues 88 to 97 (EDLKKEKPKG). Residues S226 and S235 each carry the phosphoserine modification. The tract at residues 262–282 (KLIPNPNKIRKPPKSKRTASK) is disordered. Over residues 269 to 282 (KIRKPPKSKRTASK) the composition is skewed to basic residues.

Belongs to the eukaryotic ribosomal protein eL8 family. Component of nuclear RNase P and RNase MRP ribonucleoproteins. RNase P consists of a catalytic RNA moiety and about 10 protein subunits; POP1, POP4, POP5, POP7, RPP14, RPP21, RPP25, RPP30, RPP38 and RPP40. Within the RNase P complex, POP1, POP7 and RPP25 form the 'finger' subcomplex, POP5, RPP14, RPP40 and homodimeric RPP30 form the 'palm' subcomplex, and RPP21, POP4 and RPP38 form the 'wrist' subcomplex. All subunits of the RNase P complex interact with the catalytic RNA. Several subunits of RNase P are also part of the RNase MRP complex. RNase MRP consists of a catalytic RNA moiety and about 8 protein subunits; POP1, POP7, RPP25, RPP30, RPP38, RPP40 and possibly also POP4 and POP5.

The protein localises to the nucleus. The protein resides in the nucleolus. Component of ribonuclease P, a ribonucleoprotein complex that generates mature tRNA molecules by cleaving their 5'-ends. Also a component of the MRP ribonuclease complex, which cleaves pre-rRNA sequences. This Bos taurus (Bovine) protein is Ribonuclease P protein subunit p38 (RPP38).